The following is a 2507-amino-acid chain: Highly reducing polyketide synthase lcsB (2507 aa).

The Ketosynthase family 3 (KS3) domain occupies 2–393; that stretch reads AEPIAVVGMA…GVNAHVIVES (392 aa). Residues 399–501 form a disordered region; that stretch reads NHDRGLSNGS…RNGYSGDDVE (103 aa). Polar residues-rich tracts occupy residues 405 to 414 and 470 to 488; these read SNGSTTSSSP and NDTP…TSHT. The interval 581-900 is malonyl-CoA:ACP transacylase (MAT) domain; sequence WVFTGQGAQW…DESLLQLAGK (320 aa). Positions 953 to 1080 are N-terminal hotdog fold; sequence HELLGSRVTE…GEARASVDKA (128 aa). The segment at 953-1232 is dehydratase (DH) domain; the sequence is HELLGSRVTE…FKASALTRSD (280 aa). One can recognise a PKS/mFAS DH domain in the interval 953–1234; that stretch reads HELLGSRVTE…ASALTRSDDE (282 aa). Catalysis depends on His984, which acts as the Proton acceptor; for dehydratase activity. The C-terminal hotdog fold stretch occupies residues 1092 to 1234; that stretch reads ARTVDANEWY…ASALTRSDDE (143 aa). The active-site Proton donor; for dehydratase activity is Asp1151. The interval 1402-1570 is methyltransferase (CMet) domain; that stretch reads LGHTNPRLRI…EMVAAGFAEP (169 aa). Residues 1793 to 2105 form an enoyl reductase (ER) (ER) domain region; the sequence is GLLHTMGWSQ…GGRHIGKIIV (313 aa). The interval 2130 to 2303 is ketoreductase (KR) domain; that stretch reads SYLLVGGLGG…ASVIDIGVMG (174 aa). A Carrier domain is found at 2425–2503; the sequence is EESTVIIATA…SLGDYIRTAL (79 aa). O-(pantetheine 4'-phosphoryl)serine is present on Ser2463.

The protein operates within secondary metabolite biosynthesis. Highly reducing polyketide synthase; part of the gene cluster that mediates the biosynthesis of the lipopeptide antibiotics leucinostatins that show extensive biological activities, including antimalarial, antiviral, antibacterial, antifungal, and antitumor activities, as well as phytotoxic. Leucinostatin A contains nine amino acid residues, including the unusual amino acid 4-methyl-L-proline (MePro), 2-amino-6-hydroxy-4-methyl-8-oxodecanoic acid (AHyMeOA), 3-hydroxyleucine (HyLeu), alpha-aminoisobutyric acid (AIB), beta-Ala, a 4-methylhex-2-enoic acid at the N-terminus as well as a N1,N1-dimethylpropane-1,2-diamine (DPD) at the C-terminus. The biosynthesis of leucinostatins is probably initiated with the assembly of 4-methylhex-2-enoic acid by a reducing PKS. Two reducing polyketide synthases, lcsB and lcsC, have been identified in the cluster and it is not clear which is the one that assembles 4-methylhex-2-enoic acid since both contain KS, AT, DH, cMT, ER, KR and ACP domains. The polyketide residue might be transferred to the NRPS lcsA, mediated by two additional enzymes, the acyl-CoA ligase lcsD and the thioesterase lcsE. The linear polyketide carboxylic acid, which is released from PKS, is converted to a CoA thioester by lcsD, and then lcsE hydrolyzes the thiol bond and shuttles the polyketide intermediate to lcsA. The C domain of the first module catalyzed the condensation of 4-methylhex-2-enoic acid and MePro carried by domain A1, followed by successive condensations of nine amino acids to trigger the elongation of the linear peptide. A5 and A6 domains of lcsA are proposed to incorporate leucine, A2 AHyMeOA, and A3 incorporates HyLeu. A4, A7 and A8 incorporate AIB. The AHyMeOA in leucinostatin A activated by the A2 might be produced by the second PKS (lcsB or lcsC) present within the cluster. The MePro is probably produced via leucine cyclization and may originate from a separate pathway, independent of the cluster. Another nonproteinogenic amino acid, beta-Ala, could be produced by an aspartic acid decarboxylase also localized outside of the cluster. Two candidates are VFPBJ_01400 and VFPBJ_10476. The final peptide scaffold may be released by the NAD(P)H-dependent thioester reductase (TE) at the C-terminal region of lcsA. Transamination of the lcsA product by the transaminase lcsP may produce DPD at the C-terminus. Further hydroxylation steps performed alternatively by the cytochrome P450 monooxygenases lcsI, lcsK andr lcsN then yield the non-methylated leucinostatins precursor. It is also possible that leucines can be hydroxylated prior to their incorporation into the peptide. Varying extents of methylation then lead to the formation of leucinostatins A and B. In Purpureocillium lilacinum (Paecilomyces lilacinus), this protein is Highly reducing polyketide synthase lcsB.